We begin with the raw amino-acid sequence, 60 residues long: Colanic acid capsular biosynthesis activation protein B (60 aa).

The sequence is that of Colanic acid capsular biosynthesis activation protein B (rcsB) from Klebsiella aerogenes (Enterobacter aerogenes).